The chain runs to 313 residues: MKRAPAFLSAEEVQDHLRSSSLLIPPLEAALANFSKGPDGGVMQPVRTVVPVAKHRGFLGVMPAYSAAEDALTTKLVTFYEGHSNTAVPSHQASVLLFDPSNGSLLAVMDGNVITAKRTAAVSAIATKLLKPPGSDVLCILGAGVQAYSHYEIFTEQFSFKEVRMWNRTRENAEKFASTVQGDVRVCSSVQEAVTGADVIITVTMATEPILFGEWVKPGAHINAVGASRPDWRELDDELMRQAVLYVDSREAALKESGDVLLSGADIFAELGEVISGAKPAHCEKTTVFKSLGMAVEDLVAAKLVYDSWSSGK.

Arginine 47 provides a ligand contact to 3,3',5-triiodo-L-thyronine. 13 residues coordinate NADPH: serine 90, histidine 91, arginine 118, alanine 143, valine 145, glutamine 146, asparagine 167, arginine 168, threonine 169, asparagine 172, threonine 204, methionine 205, and valine 225. Glutamate 256 is a 3,3',5-triiodo-L-thyronine binding site. Serine 291 contributes to the NADPH binding site.

It belongs to the ornithine cyclodeaminase/mu-crystallin family. As to quaternary structure, homodimer. Binds the thyroid hormone triiodothyronine (T3); T3 binding inhibits enzymatic activity. As to expression, expressed in the spiral ligament of the cochlea (at protein level).

Its subcellular location is the cytoplasm. The enzyme catalyses L-pipecolate + NADP(+) = Delta(1)-piperideine-2-carboxylate + NADPH + H(+). It carries out the reaction L-pipecolate + NAD(+) = Delta(1)-piperideine-2-carboxylate + NADH + H(+). The catalysed reaction is L-proline + NADP(+) = 1-pyrroline-2-carboxylate + NADPH + H(+). It catalyses the reaction L-proline + NAD(+) = 1-pyrroline-2-carboxylate + NADH + H(+). The enzyme catalyses (3R)-1,4-thiomorpholine-3-carboxylate + NAD(+) = 3,4-dehydrothiomorpholine-3-carboxylate + NADH + 2 H(+). It carries out the reaction (3R)-1,4-thiomorpholine-3-carboxylate + NADP(+) = 3,4-dehydrothiomorpholine-3-carboxylate + NADPH + 2 H(+). The catalysed reaction is (S)-cystathionine ketimine + NADH + 2 H(+) = (3R,5S)-2,3,5,6,7-pentahydro-1,4-thiazepine-3,5-dicarboxylate + NAD(+). It catalyses the reaction (S)-cystathionine ketimine + NADPH + 2 H(+) = (3R,5S)-2,3,5,6,7-pentahydro-1,4-thiazepine-3,5-dicarboxylate + NADP(+). The enzyme catalyses (R)-lanthionine ketimine + NADPH + 2 H(+) = (3R,5R)-1,4-thiomorpholine-3,5-dicarboxylate + NADP(+). It carries out the reaction Delta(2)-thiazoline-2-carboxylate + NADPH + 2 H(+) = L-thiazolidine-2-carboxylate + NADP(+). Its function is as follows. Catalyzes the NAD(P)H-dependent reduction of imine double bonds of a number of cyclic ketimine substrates, including sulfur-containing cyclic ketimines. Under physiological conditions, it efficiently catalyzes delta(1)-piperideine-2-carboxylate (P2C) and delta(1)-pyrroline-2-carboxylate (Pyr2C) reduction, suggesting a central role in lysine and glutamate metabolism. Additional substrates are delta(2)-thiazoline-2-carboxylate (T2C), 3,4-dehydrothiomorpholine-3-carboxylate (AECK), and (R)-lanthionine ketimine (LK) that is reduced at very low rate compared to other substrates. Also catalyzes the NAD(P)H-dependent reduction of (S)-cystathionine ketimine (CysK). This is Ketimine reductase mu-crystallin from Mus musculus (Mouse).